Reading from the N-terminus, the 248-residue chain is Small ribosomal subunit protein uS3 (248 aa).

A KH type-2 domain is found at 38 to 106 (VREYLVKTLD…QVALNILEVK (69 aa)). Positions 213 to 230 (ESEINAPAERRGRGDRNG) are enriched in basic and acidic residues. A disordered region spans residues 213–248 (ESEINAPAERRGRGDRNGRPRRGGQRRQRSEQKQEG).

It belongs to the universal ribosomal protein uS3 family. In terms of assembly, part of the 30S ribosomal subunit. Forms a tight complex with proteins S10 and S14.

In terms of biological role, binds the lower part of the 30S subunit head. Binds mRNA in the 70S ribosome, positioning it for translation. In Corynebacterium diphtheriae (strain ATCC 700971 / NCTC 13129 / Biotype gravis), this protein is Small ribosomal subunit protein uS3.